The primary structure comprises 180 residues: Crossover junction endodeoxyribonuclease RuvC (180 aa).

Residues Asp9, Glu74, and Asp146 contribute to the active site. 3 residues coordinate Mg(2+): Asp9, Glu74, and Asp146.

The protein belongs to the RuvC family. Homodimer which binds Holliday junction (HJ) DNA. The HJ becomes 2-fold symmetrical on binding to RuvC with unstacked arms; it has a different conformation from HJ DNA in complex with RuvA. In the full resolvosome a probable DNA-RuvA(4)-RuvB(12)-RuvC(2) complex forms which resolves the HJ. Requires Mg(2+) as cofactor.

It is found in the cytoplasm. The catalysed reaction is Endonucleolytic cleavage at a junction such as a reciprocal single-stranded crossover between two homologous DNA duplexes (Holliday junction).. The RuvA-RuvB-RuvC complex processes Holliday junction (HJ) DNA during genetic recombination and DNA repair. Endonuclease that resolves HJ intermediates. Cleaves cruciform DNA by making single-stranded nicks across the HJ at symmetrical positions within the homologous arms, yielding a 5'-phosphate and a 3'-hydroxyl group; requires a central core of homology in the junction. The consensus cleavage sequence is 5'-(A/T)TT(C/G)-3'. Cleavage occurs on the 3'-side of the TT dinucleotide at the point of strand exchange. HJ branch migration catalyzed by RuvA-RuvB allows RuvC to scan DNA until it finds its consensus sequence, where it cleaves and resolves the cruciform DNA. In Methylobacillus flagellatus (strain ATCC 51484 / DSM 6875 / VKM B-1610 / KT), this protein is Crossover junction endodeoxyribonuclease RuvC.